A 249-amino-acid chain; its full sequence is Adapter protein MecA (249 aa).

The protein belongs to the MecA family. Homodimer.

Its function is as follows. Enables the recognition and targeting of unfolded and aggregated proteins to the ClpC protease or to other proteins involved in proteolysis. This chain is Adapter protein MecA, found in Streptococcus thermophilus (strain ATCC BAA-491 / LMD-9).